The following is a 78-amino-acid chain: ATP synthase subunit c (78 aa).

2 consecutive transmembrane segments (helical) span residues Phe11–Val31 and Leu53–Leu73.

The protein belongs to the ATPase C chain family. In terms of assembly, F-type ATPases have 2 components, F(1) - the catalytic core - and F(0) - the membrane proton channel. F(1) has five subunits: alpha(3), beta(3), gamma(1), delta(1), epsilon(1). F(0) has four main subunits: a(1), b(1), b'(1) and c(10-14). The alpha and beta chains form an alternating ring which encloses part of the gamma chain. F(1) is attached to F(0) by a central stalk formed by the gamma and epsilon chains, while a peripheral stalk is formed by the delta, b and b' chains.

It is found in the cell inner membrane. F(1)F(0) ATP synthase produces ATP from ADP in the presence of a proton or sodium gradient. F-type ATPases consist of two structural domains, F(1) containing the extramembraneous catalytic core and F(0) containing the membrane proton channel, linked together by a central stalk and a peripheral stalk. During catalysis, ATP synthesis in the catalytic domain of F(1) is coupled via a rotary mechanism of the central stalk subunits to proton translocation. Its function is as follows. Key component of the F(0) channel; it plays a direct role in translocation across the membrane. A homomeric c-ring of between 10-14 subunits forms the central stalk rotor element with the F(1) delta and epsilon subunits. The chain is ATP synthase subunit c from Cereibacter sphaeroides (strain ATCC 17025 / ATH 2.4.3) (Rhodobacter sphaeroides).